We begin with the raw amino-acid sequence, 180 residues long: Large ribosomal subunit protein uL6 (180 aa).

Belongs to the universal ribosomal protein uL6 family. In terms of assembly, part of the 50S ribosomal subunit.

Its function is as follows. This protein binds to the 23S rRNA, and is important in its secondary structure. It is located near the subunit interface in the base of the L7/L12 stalk, and near the tRNA binding site of the peptidyltransferase center. This Clostridium botulinum (strain 657 / Type Ba4) protein is Large ribosomal subunit protein uL6.